Here is a 473-residue protein sequence, read N- to C-terminus: Photosystem II CP43 reaction center protein (473 aa).

The propeptide occupies 1-14; that stretch reads MKTLYSLRRFYHVE. Thr-15 is subject to N-acetylthreonine. A Phosphothreonine modification is found at Thr-15. 5 consecutive transmembrane segments (helical) span residues 69-93, 134-155, 178-200, 255-275, and 291-312; these read LFEV…PHLA, LLGP…KDRN, KASY…RKIT, KPFA…LSYS, and WFNN…ASQA. Glu-367 provides a ligand contact to [CaMn4O5] cluster. A helical transmembrane segment spans residues 447-471; sequence RARAAAAGFEKGIDRDFEPVLSMTP.

Belongs to the PsbB/PsbC family. PsbC subfamily. PSII is composed of 1 copy each of membrane proteins PsbA, PsbB, PsbC, PsbD, PsbE, PsbF, PsbH, PsbI, PsbJ, PsbK, PsbL, PsbM, PsbT, PsbX, PsbY, PsbZ, Psb30/Ycf12, at least 3 peripheral proteins of the oxygen-evolving complex and a large number of cofactors. It forms dimeric complexes. The cofactor is Binds multiple chlorophylls and provides some of the ligands for the Ca-4Mn-5O cluster of the oxygen-evolving complex. It may also provide a ligand for a Cl- that is required for oxygen evolution. PSII binds additional chlorophylls, carotenoids and specific lipids..

The protein resides in the plastid. The protein localises to the chloroplast thylakoid membrane. Its function is as follows. One of the components of the core complex of photosystem II (PSII). It binds chlorophyll and helps catalyze the primary light-induced photochemical processes of PSII. PSII is a light-driven water:plastoquinone oxidoreductase, using light energy to abstract electrons from H(2)O, generating O(2) and a proton gradient subsequently used for ATP formation. The protein is Photosystem II CP43 reaction center protein of Cicer arietinum (Chickpea).